The chain runs to 403 residues: Phosphoglycerate kinase (403 aa).

Residues 22-24, R37, 60-63, R119, and R152 each bind substrate; these read DFN and HFGR. ATP-binding positions include K202, E324, and 354-357; that span reads GGDT.

It belongs to the phosphoglycerate kinase family. In terms of assembly, monomer.

Its subcellular location is the cytoplasm. It carries out the reaction (2R)-3-phosphoglycerate + ATP = (2R)-3-phospho-glyceroyl phosphate + ADP. It functions in the pathway carbohydrate degradation; glycolysis; pyruvate from D-glyceraldehyde 3-phosphate: step 2/5. The chain is Phosphoglycerate kinase from Maricaulis maris (strain MCS10) (Caulobacter maris).